The chain runs to 202 residues: Transcriptional regulator GfcR 2 (202 aa).

The protein belongs to the purine/pyrimidine phosphoribosyltransferase family. GfcR subfamily.

The protein is Transcriptional regulator GfcR 2 of Methanosarcina barkeri (strain Fusaro / DSM 804).